Consider the following 340-residue polypeptide: tRNA N6-adenosine threonylcarbamoyltransferase (340 aa).

Fe cation contacts are provided by histidine 111 and histidine 115. Substrate contacts are provided by residues 134–138 (LVSGG), aspartate 167, glycine 180, and asparagine 272. Aspartate 300 contacts Fe cation.

Belongs to the KAE1 / TsaD family. Requires Fe(2+) as cofactor.

It is found in the cytoplasm. The enzyme catalyses L-threonylcarbamoyladenylate + adenosine(37) in tRNA = N(6)-L-threonylcarbamoyladenosine(37) in tRNA + AMP + H(+). Functionally, required for the formation of a threonylcarbamoyl group on adenosine at position 37 (t(6)A37) in tRNAs that read codons beginning with adenine. Is involved in the transfer of the threonylcarbamoyl moiety of threonylcarbamoyl-AMP (TC-AMP) to the N6 group of A37, together with TsaE and TsaB. TsaD likely plays a direct catalytic role in this reaction. The protein is tRNA N6-adenosine threonylcarbamoyltransferase of Proteus mirabilis (strain HI4320).